The primary structure comprises 201 residues: Small ribosomal subunit protein uS4c (201 aa).

Residues 89–151 form the S4 RNA-binding domain; that stretch reads MRLDNILFRL…QKSKTLIQNY (63 aa).

The protein belongs to the universal ribosomal protein uS4 family. As to quaternary structure, part of the 30S ribosomal subunit. Contacts protein S5. The interaction surface between S4 and S5 is involved in control of translational fidelity.

The protein localises to the plastid. It is found in the chloroplast. Its function is as follows. One of the primary rRNA binding proteins, it binds directly to 16S rRNA where it nucleates assembly of the body of the 30S subunit. With S5 and S12 plays an important role in translational accuracy. The protein is Small ribosomal subunit protein uS4c (rps4) of Phaseolus vulgaris (Kidney bean).